Reading from the N-terminus, the 627-residue chain is Protein fem-1 homolog B (627 aa).

ANK repeat units follow at residues glutamine 45–glutamine 74, aspartate 87–histidine 116, threonine 120–isoleucine 149, and tyrosine 153–alanine 182. Positions 185, 186, and 218 each coordinate Zn(2+). 2 ANK repeats span residues cysteine 186–valine 215 and histidine 218–serine 248. Residues serine 344 to glycine 377 form a TPR repeat. ANK repeat units lie at residues glutamate 483–alanine 527 and glutamate 531–methionine 568.

It belongs to the fem-1 family. Component of a CRL2 E3 ubiquitin-protein ligase complex, also named ECS (Elongin BC-CUL2/5-SOCS-box protein) complex, composed of CUL2, Elongin BC (ELOB and ELOC), RBX1 and substrate-specific adapter FEM1B. Homooligomer. Interacts with PPM1F and PHTF1. Interacts with the death domain of FAS/TNFRSF6 and TNFRSF1A. Interacts with CHEK1. Interacts with NKX3-1. As to expression, present in adult testis (at protein level).

Its subcellular location is the cytoplasm. It is found in the nucleus. Its pathway is protein modification; protein ubiquitination. Activity of the CRL2(FEM1B) complex toward FNIP1 is inhibited by BEX family proteins (BEX1, BEX2, BEX3 and/or BEX4) in absence of reductive stress. Mechanistically, BEX proteins act as pseudosubstrate inhibitors that associate with FEM1B via zinc in absence of reductive stress, thereby preventing association between FEM1B and FNIP1. Its function is as follows. Substrate-recognition component of a Cul2-RING (CRL2) E3 ubiquitin-protein ligase complex of the DesCEND (destruction via C-end degrons) pathway, which recognizes a C-degron located at the extreme C terminus of target proteins, leading to their ubiquitination and degradation. The C-degron recognized by the DesCEND pathway is usually a motif of less than ten residues and can be present in full-length proteins, truncated proteins or proteolytically cleaved forms. The CRL2(FEM1B) complex specifically recognizes proteins ending with -Gly-Leu-Asp-Arg, such as CDK5R1, leading to their ubiquitination and degradation. Also acts as a regulator of the reductive stress response by mediating ubiquitination of reduced FNIP1: in response to reductive stress, the CRL2(FEM1B) complex specifically recognizes a conserved Cys degron in FNIP1 when this degron is reduced, leading to FNIP1 degradation and subsequent activation of mitochondria to recalibrate reactive oxygen species (ROS). Mechanistically, recognizes and binds reduced FNIP1 through two interface zinc ions, which act as a molecular glue that recruit reduced FNIP1 to FEM1B. Promotes ubiquitination of GLI1, suppressing GLI1 transcriptional activator activity. Promotes ubiquitination and degradation of ANKRD37. Promotes ubiquitination and degradation of SLBP. Involved in apoptosis by acting as a death receptor-associated protein that mediates apoptosis. Also involved in glucose homeostasis in pancreatic islet. May also act as an adapter/mediator in replication stress-induced signaling that leads to the activation of CHEK1. In Rattus norvegicus (Rat), this protein is Protein fem-1 homolog B.